We begin with the raw amino-acid sequence, 98 residues long: DNA-binding protein Fis (98 aa).

The H-T-H motif DNA-binding region spans 74 to 93; sequence QTRAALMMGINRGTLRKKLK.

It belongs to the transcriptional regulatory Fis family. In terms of assembly, homodimer.

Activates ribosomal RNA transcription. Plays a direct role in upstream activation of rRNA promoters. The chain is DNA-binding protein Fis from Pectobacterium atrosepticum (strain SCRI 1043 / ATCC BAA-672) (Erwinia carotovora subsp. atroseptica).